The chain runs to 158 residues: Lipoprotein signal peptidase (158 aa).

The next 3 helical transmembrane spans lie at 12–32, 46–66, and 71–91; these read LFWW…AWIV, IIPG…FSLF, and IWLR…AILG. Active-site residues include Asp124 and Asp140. The helical transmembrane segment at 135–155 threads the bilayer; the sequence is VFNVADIAINIGIVCLLWSAW.

The protein belongs to the peptidase A8 family.

The protein localises to the cell inner membrane. The enzyme catalyses Release of signal peptides from bacterial membrane prolipoproteins. Hydrolyzes -Xaa-Yaa-Zaa-|-(S,diacylglyceryl)Cys-, in which Xaa is hydrophobic (preferably Leu), and Yaa (Ala or Ser) and Zaa (Gly or Ala) have small, neutral side chains.. It functions in the pathway protein modification; lipoprotein biosynthesis (signal peptide cleavage). In terms of biological role, this protein specifically catalyzes the removal of signal peptides from prolipoproteins. The protein is Lipoprotein signal peptidase of Thermosynechococcus vestitus (strain NIES-2133 / IAM M-273 / BP-1).